Reading from the N-terminus, the 325-residue chain is Fructose-1,6-bisphosphatase class 1 (325 aa).

Residues Glu84, Asp103, Leu105, and Asp106 each contribute to the Mg(2+) site. Substrate-binding positions include 106-109 (DGSS), Asn196, and Lys262. A Mg(2+)-binding site is contributed by Glu268.

This sequence belongs to the FBPase class 1 family. Homotetramer. The cofactor is Mg(2+).

It localises to the cytoplasm. It carries out the reaction beta-D-fructose 1,6-bisphosphate + H2O = beta-D-fructose 6-phosphate + phosphate. It functions in the pathway carbohydrate biosynthesis; gluconeogenesis. The protein is Fructose-1,6-bisphosphatase class 1 of Shewanella baltica (strain OS195).